The primary structure comprises 977 residues: Poly(ADP-ribose) glycohydrolase (977 aa).

Residues 1-69 (MSAGPGCEPC…LGRAGQHRGS (69 aa)) form a disordered region. Positions 1–457 (MSAGPGCEPC…LSPDKKWLGT (457 aa)) are A-domain. The Nuclear localization signal signature appears at 10 to 16 (CTKRPRW). Positions 17 to 29 (DAAATSPPAASDA) are enriched in low complexity. Ser-69 is modified (phosphoserine). Residues 77 to 84 (QKTITSWM) carry the PIP-box (PCNA interacting peptide) motif. Phosphoserine occurs at positions 138 and 198. The tract at residues 184-407 (SNANVDQSSP…CRNSKQHGRK (224 aa)) is disordered. Composition is skewed to basic and acidic residues over residues 192–207 (SPKD…ESRD) and 223–234 (TMEDEQGREARS). Position 200 is a phosphothreonine (Thr-200). Phosphoserine occurs at positions 262, 265, 287, 292, 299, 303, and 317. Residues 280–291 (NRLNRQESSLGN) are compositionally biased toward polar residues. Residues 317–332 (SEADEETSPGFDEQED) are compositionally biased toward acidic residues. Residues 333 to 343 (SSSAQTANKPS) are compositionally biased toward polar residues. Lys-341 is modified (N6-acetyllysine). Over residues 346–356 (QPREADTELRK) the composition is skewed to basic and acidic residues. Ser-449 bears the Phosphoserine mark. Residues 611 to 796 (QPIPLLKQKM…TEQYSEYTGY (186 aa)) form a catalytic region. Residue 727-728 (IE) coordinates substrate. Residue Asp-738 is part of the active site. Residues Asn-741 and Gln-755 each coordinate substrate. Catalysis depends on residues Glu-756 and Glu-757. Substrate-binding positions include Tyr-796 and 870–875 (NWGCGA).

The protein belongs to the poly(ADP-ribose) glycohydrolase family. In terms of assembly, interacts with PCNA. Interacts with NUDT5.

The protein resides in the nucleus. It carries out the reaction [(1''-&gt;2')-ADP-alpha-D-ribose](n) + H2O = [(1''-&gt;2')-ADP-alpha-D-ribose](n-1) + ADP-D-ribose. In terms of biological role, poly(ADP-ribose) glycohydrolase that degrades poly(ADP-ribose) by hydrolyzing the ribose-ribose bonds present in poly(ADP-ribose). PARG acts both as an endo- and exoglycosidase, releasing poly(ADP-ribose) of different length as well as ADP-ribose monomers. It is however unable to cleave the ester bond between the terminal ADP-ribose and ADP-ribosylated residues, leaving proteins that are mono-ADP-ribosylated. Poly(ADP-ribose) is synthesized after DNA damage is only present transiently and is rapidly degraded by PARG. Required to prevent detrimental accumulation of poly(ADP-ribose) upon prolonged replicative stress, while it is not required for recovery from transient replicative stress. Responsible for the prevalence of mono-ADP-ribosylated proteins in cells, thanks to its ability to degrade poly(ADP-ribose) without cleaving the terminal protein-ribose bond. Required for retinoid acid-dependent gene transactivation, probably by removing poly(ADP-ribose) from histone demethylase KDM4D, allowing chromatin derepression at RAR-dependent gene promoters. Involved in the synthesis of ATP in the nucleus, together with PARP1, NMNAT1 and NUDT5. Nuclear ATP generation is required for extensive chromatin remodeling events that are energy-consuming. The sequence is that of Poly(ADP-ribose) glycohydrolase from Bos taurus (Bovine).